The primary structure comprises 20 residues: DEQSGISQTVIVGPWGAKVS.

It belongs to the jacalin lectin family. As to quaternary structure, tetramer of four alpha chains associated with two or four beta chains.

D-galactose-specific lectin, binds the T-antigen structure Gal-beta1,3-GalNAc (Thomsen-Friedenreich-antigen-specific lectin). Potent and selective stimulant of distinct T- and B-cell functions. Shows a unique ability to specifically recognize IgA-1 from human serum. The protein is Agglutinin beta-3 chain of Artocarpus integer (Jack fruit).